A 125-amino-acid chain; its full sequence is Succinate dehydrogenase assembly factor 3, mitochondrial (125 aa).

Residues 1-42 (MRTTNHLYRTVHRQGKPLLPPLHLYRRILRAHRTFPPAQRAL) constitute a mitochondrion transit peptide.

It belongs to the complex I LYR family. SDHAF3 subfamily. Interacts with the iron-sulfur protein subunit within the SDH catalytic dimer.

It localises to the mitochondrion matrix. In terms of biological role, plays an essential role in the assembly of succinate dehydrogenase (SDH), an enzyme complex (also referred to as respiratory complex II) that is a component of both the tricarboxylic acid (TCA) cycle and the mitochondrial electron transport chain, and which couples the oxidation of succinate to fumarate with the reduction of ubiquinone (coenzyme Q) to ubiquinol. Promotes maturation of the iron-sulfur protein subunit of the SDH catalytic dimer, protecting it from the deleterious effects of oxidants. May act together with SDHAF1. This Eremothecium gossypii (strain ATCC 10895 / CBS 109.51 / FGSC 9923 / NRRL Y-1056) (Yeast) protein is Succinate dehydrogenase assembly factor 3, mitochondrial.